We begin with the raw amino-acid sequence, 304 residues long: Non-specific ribonucleoside hydrolase RihC (304 aa).

His233 is a catalytic residue.

The protein belongs to the IUNH family. RihC subfamily.

Functionally, hydrolyzes both purine and pyrimidine ribonucleosides with a broad-substrate specificity. This chain is Non-specific ribonucleoside hydrolase RihC, found in Klebsiella pneumoniae (strain 342).